The primary structure comprises 172 residues: MLAKVERIDPSELELNDKLIFINRVTKVVKGGKRMGFAALVVTGDGKNHVGIGVGKAKEVPSAISKASANAKRNLSRILLNGTTVPHEIVFKYGAAQVLLKPAAPGTGIIAGGSVRAVLESTGIKDVLTKSMGCSNKANVAKATLGGLTAMRDPKATVTKRRSSLKEEATGG.

The region spanning leucine 15–isoleucine 78 is the S5 DRBM domain.

The protein belongs to the universal ribosomal protein uS5 family. As to quaternary structure, part of the 30S ribosomal subunit. Contacts proteins S4 and S8.

With S4 and S12 plays an important role in translational accuracy. Its function is as follows. Located at the back of the 30S subunit body where it stabilizes the conformation of the head with respect to the body. This is Small ribosomal subunit protein uS5 from Dehalococcoides mccartyi (strain CBDB1).